Consider the following 297-residue polypeptide: Bax inhibitor 1 (297 aa).

Residues 1-53 are Lumenal-facing; the sequence is MSGPPPPYEEQSSHLYGQPASSQDGNAFIPEDFKYSTVVISCEPIIRQRFMHK. The helical transmembrane segment at 54-74 threads the bilayer; the sequence is VYSLLSCQLLASLSFCYWASV. Residues 75–85 are Cytoplasmic-facing; that stretch reads STSLQNFIMSH. The chain crosses the membrane as a helical span at residues 86–106; sequence IALFYICMVVSLVSCIWLAVS. At 107 to 146 the chain is on the lumenal side; that stretch reads PRPEDYEASVPEPLLTGSSEEPAQEQRRLPWYVLSSYKQK. A helical membrane pass occupies residues 147 to 167; that stretch reads LTLLSIFTLSEAYCLSLVTLA. Residues 168–171 lie on the Cytoplasmic side of the membrane; sequence YDKD. The chain crosses the membrane as a helical span at residues 172 to 192; it reads TVLSALLITTIVVVGVSLTAL. Topologically, residues 193-208 are lumenal; sequence SERFENVLNSATSIYY. Residues 209-229 form a helical membrane-spanning segment; the sequence is WLNWGLWIMIGMGLTALLFGW. Residues 230–239 are Cytoplasmic-facing; that stretch reads NTHSSKFNLL. Residues 240-260 traverse the membrane as a helical segment; the sequence is YGWLGAILFTAYLFIDTQLIF. Over 261-270 the chain is Lumenal; it reads RKVYPDEEVR. Residues 271–291 form a helical membrane-spanning segment; sequence CAMMLYLDIVNLFLSILRILA. Residues 292–297 are Cytoplasmic-facing; it reads NSNDDN.

It belongs to the BI1 family. LFG subfamily.

Its subcellular location is the endoplasmic reticulum membrane. It localises to the vacuole membrane. It is found in the mitochondrion membrane. Links the unfolded protein response and programmed cell death and mediates mitochondrial-dependent apoptosis. Induces cell death and disruption of the mitochondrial transmembrane potential via the mitochondrial phosphate carrier MIR1. Dispensible for starvation-induced autophagy. In Saccharomyces cerevisiae (strain ATCC 204508 / S288c) (Baker's yeast), this protein is Bax inhibitor 1 (BXI1).